Consider the following 259-residue polypeptide: MTDNDSDVRLAHRLAEIADTLAWEFFGGAPAVRHKSDGSPVSEADLAVEKALLAVLAAERPGDAVLTEESGSLGTRSSRRRWILDPIDGTIPFLAGERGWGTHVALEVDEELRTAVLSRPTERSRWWAVRGRGAFTSVRGEPLSAARPLRIPSAPLPLEAARVGGFLMPDSPVEPVRDRMRWVESSVCLVGDLLEGRVDAVIDEGGHVWDRAPAALLVHEAGGRVDDLRGGGRLDERWLVYAADGVADGLAGLLRDVGA.

The protein belongs to the inositol monophosphatase superfamily.

The catalysed reaction is dTTP + alpha-D-glucose 1-phosphate + H(+) = dTDP-alpha-D-glucose + diphosphate. Its pathway is antibiotic biosynthesis; streptomycin biosynthesis. This Streptomyces griseus protein is Glucose-1-phosphate thymidylyltransferase (strO).